The sequence spans 528 residues: Apolipoprotein N-acyltransferase (528 aa).

Helical transmembrane passes span 8–28 (IMLLAGWRRALLAIASGAVGA), 69–89 (AFWIGWLFGFGYFVAGLWWLG), 99–119 (FAWALPLAVLGLPAVLAVFYG), 178–198 (VLGLFGVSALAVFVFAAPALL), and 203–223 (GAKLGLALAGILFCGHLGYGA). The 250-residue stretch at 241 to 490 (VQPNIDQAAK…EGVENATFTL (250 aa)) folds into the CN hydrolase domain. Catalysis depends on Glu-285, which acts as the Proton acceptor. Lys-349 is a catalytic residue. The active-site Nucleophile is Cys-402.

Belongs to the CN hydrolase family. Apolipoprotein N-acyltransferase subfamily.

It localises to the cell inner membrane. The enzyme catalyses N-terminal S-1,2-diacyl-sn-glyceryl-L-cysteinyl-[lipoprotein] + a glycerophospholipid = N-acyl-S-1,2-diacyl-sn-glyceryl-L-cysteinyl-[lipoprotein] + a 2-acyl-sn-glycero-3-phospholipid + H(+). Its pathway is protein modification; lipoprotein biosynthesis (N-acyl transfer). Catalyzes the phospholipid dependent N-acylation of the N-terminal cysteine of apolipoprotein, the last step in lipoprotein maturation. This chain is Apolipoprotein N-acyltransferase, found in Allorhizobium ampelinum (strain ATCC BAA-846 / DSM 112012 / S4) (Agrobacterium vitis (strain S4)).